Consider the following 490-residue polypeptide: tRNA modification GTPase MnmE (490 aa).

Positions 23, 80, and 133 each coordinate (6S)-5-formyl-5,6,7,8-tetrahydrofolate. The 184-residue stretch at 229–412 (GIEVVIAGQP…LRRILLEVAG (184 aa)) folds into the TrmE-type G domain. Asn239 lines the K(+) pocket. GTP is bound by residues 239–244 (NAGKSS), 258–264 (TPVAGTT), and 283–286 (DTAG). Ser243 serves as a coordination point for Mg(2+). Residues Thr258, Val260, and Thr263 each contribute to the K(+) site. Thr264 is a binding site for Mg(2+). A compositionally biased stretch (low complexity) spans 366–382 (PTAPTESAAVPPASARP). The disordered stretch occupies residues 366 to 388 (PTAPTESAAVPPASARPAPAPRP). Residue 393–395 (SAR) participates in GTP binding. Residue Lys490 coordinates (6S)-5-formyl-5,6,7,8-tetrahydrofolate.

The protein belongs to the TRAFAC class TrmE-Era-EngA-EngB-Septin-like GTPase superfamily. TrmE GTPase family. As to quaternary structure, homodimer. Heterotetramer of two MnmE and two MnmG subunits. Requires K(+) as cofactor.

Its subcellular location is the cytoplasm. In terms of biological role, exhibits a very high intrinsic GTPase hydrolysis rate. Involved in the addition of a carboxymethylaminomethyl (cmnm) group at the wobble position (U34) of certain tRNAs, forming tRNA-cmnm(5)s(2)U34. The polypeptide is tRNA modification GTPase MnmE (Verminephrobacter eiseniae (strain EF01-2)).